The primary structure comprises 501 residues: Dynein regulatory complex subunit 5 (501 aa).

Positions 1–23 are enriched in polar residues; it reads MQETVTTSALLDPSHSSVSTQDK. Disordered regions lie at residues 1-56 and 203-222; these read MQET…HPGA and PAQL…EMEE. A compositionally biased stretch (low complexity) spans 24 to 34; that stretch reads SSTGGHTSSTG. A compositionally biased stretch (polar residues) spans 35–49; the sequence is PQPSKPSITPVSAKS. 5 LRR repeats span residues 308–321, 335–355, 363–383, 391–411, and 419–439; these read VLEE…LIGD, RLRV…QSLA, NLIS…QALA, CLTT…TLLS, and TLTS…KQLL.

This sequence belongs to the DRC5 family. As to quaternary structure, component of the nexin-dynein regulatory complex (N-DRC). Interacts with DRC1. Interacts with FBXL13/DRC6, DRC3 and DRC7.

It is found in the cell projection. Its subcellular location is the cilium. The protein resides in the flagellum. It localises to the cytoplasm. The protein localises to the cytoskeleton. It is found in the flagellum axoneme. Component of the nexin-dynein regulatory complex (N-DRC) a key regulator of ciliary/flagellar motility which maintains the alignment and integrity of the distal axoneme and regulates microtubule sliding in motile axonemes. May play a role in the assembly of N-DRC. May be required for sperm motility. The chain is Dynein regulatory complex subunit 5 (TCTE1) from Macaca fascicularis (Crab-eating macaque).